We begin with the raw amino-acid sequence, 336 residues long: Probable allantoicase (336 aa).

The protein belongs to the allantoicase family.

It carries out the reaction allantoate + H2O = (S)-ureidoglycolate + urea. It functions in the pathway nitrogen metabolism; (S)-allantoin degradation; (S)-ureidoglycolate from allantoate (aminidohydrolase route): step 1/1. The sequence is that of Probable allantoicase from Acinetobacter baumannii (strain ATCC 17978 / DSM 105126 / CIP 53.77 / LMG 1025 / NCDC KC755 / 5377).